The sequence spans 347 residues: GMP reductase (347 aa).

NADP(+) is bound at residue 108 to 131 (TDFEKTKQILIANPALNFLCIDVA). Residues glycine 181 and glycine 183 each contribute to the K(+) site. The active-site Thioimidate intermediate is cysteine 186. NADP(+) is bound at residue 216–239 (IISDGGCTMPGDVAKAFGGGADFV).

It belongs to the IMPDH/GMPR family. GuaC type 1 subfamily. As to quaternary structure, homotetramer.

It catalyses the reaction IMP + NH4(+) + NADP(+) = GMP + NADPH + 2 H(+). In terms of biological role, catalyzes the irreversible NADPH-dependent deamination of GMP to IMP. It functions in the conversion of nucleobase, nucleoside and nucleotide derivatives of G to A nucleotides, and in maintaining the intracellular balance of A and G nucleotides. In Enterobacter sp. (strain 638), this protein is GMP reductase.